The following is a 47-amino-acid chain: Diuretic hormone 2 (47 aa).

Belongs to the sauvagine/corticotropin-releasing factor/urotensin I family.

The protein localises to the secreted. Stimulates fluid secretion by the Malpighian tubules. Increases cyclic AMP production in Malpighian tubules. This Tenebrio molitor (Yellow mealworm beetle) protein is Diuretic hormone 2.